Reading from the N-terminus, the 172-residue chain is Large ribosomal subunit protein uL10 (172 aa).

Belongs to the universal ribosomal protein uL10 family. Part of the ribosomal stalk of the 50S ribosomal subunit. The N-terminus interacts with L11 and the large rRNA to form the base of the stalk. The C-terminus forms an elongated spine to which L12 dimers bind in a sequential fashion forming a multimeric L10(L12)X complex.

Its function is as follows. Forms part of the ribosomal stalk, playing a central role in the interaction of the ribosome with GTP-bound translation factors. The polypeptide is Large ribosomal subunit protein uL10 (Syntrophotalea carbinolica (strain DSM 2380 / NBRC 103641 / GraBd1) (Pelobacter carbinolicus)).